Consider the following 439-residue polypeptide: L-tryptophan decarboxylase (439 aa).

This sequence belongs to the phosphatidylserine decarboxylase family.

It catalyses the reaction L-tryptophan + H(+) = tryptamine + CO2. It participates in secondary metabolite biosynthesis. Its function is as follows. L-tryptophan decarboxylase; part of the gene cluster that mediates the biosynthesis of psilocybin, a psychotropic tryptamine-derived natural product. The first step in the pathway is the decarboxylation of L-tryptophan to tryptamine by the decarboxylase psiD. 4-hydroxy-L-tryptophan is accepted as substrate by psiD as well. The cytochrome P450 monooxygenase psiH then converts tryptamine to 4-hydroxytryptamine. The kinase psiK catalyzes the 4-O-phosphorylation step by converting 4-hydroxytryptamine into norbaeocystin. The methyltransferase psiM then catalyzes iterative methyl transfer to the amino group of norbaeocystin to yield psilocybin via a monomethylated intermediate, baeocystin. 4-hydroxy-6-methyl-l-tryptophancan also be converted the decarboxylase PsiD, kinase PsiK, and methyltransferase PsiM into respectively 6-methyl-norbaeocystin, 6-methylbaeocystin, and 6-methylpsilocybin. This chain is L-tryptophan decarboxylase, found in Psilocybe cubensis (Psychedelic mushroom).